A 49-amino-acid chain; its full sequence is Large ribosomal subunit protein bL36 (49 aa).

The protein belongs to the bacterial ribosomal protein bL36 family.

The polypeptide is Large ribosomal subunit protein bL36 (Pseudomonas fluorescens (strain ATCC BAA-477 / NRRL B-23932 / Pf-5)).